A 426-amino-acid polypeptide reads, in one-letter code: Serine--tRNA ligase (426 aa).

233-235 (TAE) serves as a coordination point for L-serine. 264-266 (RSE) is a binding site for ATP. Glu287 is a binding site for L-serine. Residue 351–354 (EISS) coordinates ATP. Residue Ser387 coordinates L-serine.

The protein belongs to the class-II aminoacyl-tRNA synthetase family. Type-1 seryl-tRNA synthetase subfamily. Homodimer. The tRNA molecule binds across the dimer.

The protein resides in the cytoplasm. The catalysed reaction is tRNA(Ser) + L-serine + ATP = L-seryl-tRNA(Ser) + AMP + diphosphate + H(+). It carries out the reaction tRNA(Sec) + L-serine + ATP = L-seryl-tRNA(Sec) + AMP + diphosphate + H(+). The protein operates within aminoacyl-tRNA biosynthesis; selenocysteinyl-tRNA(Sec) biosynthesis; L-seryl-tRNA(Sec) from L-serine and tRNA(Sec): step 1/1. Catalyzes the attachment of serine to tRNA(Ser). Is also able to aminoacylate tRNA(Sec) with serine, to form the misacylated tRNA L-seryl-tRNA(Sec), which will be further converted into selenocysteinyl-tRNA(Sec). This Pseudomonas putida (strain ATCC 47054 / DSM 6125 / CFBP 8728 / NCIMB 11950 / KT2440) protein is Serine--tRNA ligase.